A 189-amino-acid chain; its full sequence is Elongation factor P (189 aa).

An N6-(3,6-diaminohexanoyl)-5-hydroxylysine modification is found at K34.

This sequence belongs to the elongation factor P family. In terms of processing, may be beta-lysylated on the epsilon-amino group of Lys-34 by the combined action of EpmA and EpmB, and then hydroxylated on the C5 position of the same residue by EpmC (if this protein is present). Lysylation is critical for the stimulatory effect of EF-P on peptide-bond formation. The lysylation moiety may extend toward the peptidyltransferase center and stabilize the terminal 3-CCA end of the tRNA. Hydroxylation of the C5 position on Lys-34 may allow additional potential stabilizing hydrogen-bond interactions with the P-tRNA.

It localises to the cytoplasm. Its pathway is protein biosynthesis; polypeptide chain elongation. Involved in peptide bond synthesis. Alleviates ribosome stalling that occurs when 3 or more consecutive Pro residues or the sequence PPG is present in a protein, possibly by augmenting the peptidyl transferase activity of the ribosome. Modification of Lys-34 is required for alleviation. In Teredinibacter turnerae (strain ATCC 39867 / T7901), this protein is Elongation factor P.